We begin with the raw amino-acid sequence, 1116 residues long: Electrogenic sodium bicarbonate cotransporter 4 (1116 aa).

Over residues 1–14 (MKVDEEKAGVKKLD) the composition is skewed to basic and acidic residues. 3 disordered regions span residues 1–92 (MKVD…TRSP), 222–257 (PIHR…STED), and 431–467 (PGQM…SGDE). Over 1 to 515 (MKVDEEKAGV…YDGFHLQSIS (515 aa)) the chain is Cytoplasmic. Low complexity predominate over residues 233–247 (SVSTTNRSSARSSSA). The segment covering 437–464 (SVGGGGASAGGGGSGGGAGGSGAGGVGS) has biased composition (gly residues). The helical transmembrane segment at 516 to 536 (AVLFIYLGCITNAITFGGLLG) threads the bilayer. The Extracellular portion of the chain corresponds to 537–558 (DATDNYQGVMESFLGTAMAGSL). Residues 559-579 (FCLFSGQPLIILSSTGPILIF) traverse the membrane as a helical segment. Over 580–600 (EKLLFDFSKANGLDYMEFRLW) the chain is Cytoplasmic. The helical transmembrane segment at 601–621 (IGLHSAIQCLILVATDASFII) threads the bilayer. Over 622 to 631 (KYITRFTEEG) the chain is Extracellular. Residues 632–652 (FSTLISFIFIYDAIKKMIGAF) form a helical membrane-spanning segment. The Cytoplasmic portion of the chain corresponds to 653 to 730 (KYYPINTDFK…GGRLLGSSCQ (78 aa)). The chain crosses the membrane as a helical span at residues 731–751 (FVPDLALMSFILFFGTYSMTL). Over 752–768 (TLKKFKFSRYFPTKVRT) the chain is Extracellular. A helical membrane pass occupies residues 769-789 (LVADFSIVFSILLFCGIDACF). The Cytoplasmic portion of the chain corresponds to 790 to 819 (GLQTPKLHVPSVIKPTRPDRGWFVAPFGKN). A helical membrane pass occupies residues 820–840 (PWWVYPASILPALLVTILIFM). At 841–865 (DQQITAVIVNRKENKLRKAAGYHLD) the chain is on the extracellular side. The chain crosses the membrane as a helical span at residues 866 to 886 (LFWVGILMALCSFTGLPWYVA). Over 887 to 922 (ATVISIAHIDSLKMETETSAPGEQPQFLGVREQRVT) the chain is Cytoplasmic. Residues 923-943 (GVMVFILTGISVFLAPILKYI) traverse the membrane as a helical segment. At 944 to 945 (PM) the chain is on the extracellular side. Residues 946–966 (PVLYGVFLYMGVASLNGIQFW) traverse the membrane as a helical segment. Residues 967–987 (ERCKLFLMPAKHQPDHAFLRH) are Cytoplasmic-facing. 2 consecutive transmembrane segments (helical) span residues 988–1008 (VPLR…ALLW) and 1009–1029 (ILKS…LIIV). The Cytoplasmic portion of the chain corresponds to 1030–1116 (RRLLDLIFSQ…KRSSSWSYSL (87 aa)).

Belongs to the anion exchanger (TC 2.A.31) family.

It is found in the apical cell membrane. Its subcellular location is the basolateral cell membrane. The catalysed reaction is 2 hydrogencarbonate(out) + Na(+)(out) = 2 hydrogencarbonate(in) + Na(+)(in). It catalyses the reaction 3 hydrogencarbonate(out) + Na(+)(out) = 3 hydrogencarbonate(in) + Na(+)(in). In terms of biological role, mediates sodium- and bicarbonate-dependent electrogenic sodium bicarbonate cotransport, with a Na(+):HCO3(-) stoichiometry varying from 1:2 to 1:3. This Mus musculus (Mouse) protein is Electrogenic sodium bicarbonate cotransporter 4 (Slc4a5).